We begin with the raw amino-acid sequence, 97 residues long: Protein MxiI (97 aa).

The protein to S.typhimurium PrgJ.

Necessary for the secretion of IPA invasins. This is Protein MxiI (mxiI) from Shigella flexneri.